A 391-amino-acid polypeptide reads, in one-letter code: Putative gustatory receptor 36b (391 aa).

At 1 to 4 (MVDW) the chain is on the cytoplasmic side. The helical transmembrane segment at 5-25 (VVLLLKAVHIYCYLIGLSNFE) threads the bilayer. Over 26–39 (FDCRTGRVFKSRRC) the chain is Extracellular. Residues 40–60 (TIYAFMANIFILITIIYNFTA) traverse the membrane as a helical segment. Residues 61–74 (HGDTNLLFQSANKL) lie on the Cytoplasmic side of the membrane. Residues 75-95 (HEYVIIIMSGLKIVAGLITVL) traverse the membrane as a helical segment. The Extracellular segment spans residues 96–127 (NRWLQRGQMMQLVKDVIRLYMINPQLKSMIRW). Residues 128-148 (GILLKAFISFAIELLQVTLSV) traverse the membrane as a helical segment. Residues 149 to 165 (DALDRQGTAEMMGLLVK) are Cytoplasmic-facing. The helical transmembrane segment at 166–186 (LCVSFIMNLAISQHFLVILLI) threads the bilayer. The Extracellular segment spans residues 187–284 (RAQYRIMNAK…YKYGPHNLKL (98 aa)). The chain crosses the membrane as a helical span at residues 285 to 305 (SAKTSIIVCILITLFYLDALV). The Cytoplasmic segment spans residues 306-363 (NCNNMLRVLDHHKDFLGLLEERTVFASSLDIRLEESFESLQLQLARNPLKINVMGMFP). Residues 364–384 (ITRGSTAAMCASVIVNSIFLI) traverse the membrane as a helical segment. Over 385-391 (QFDMEFF) the chain is Extracellular.

This sequence belongs to the insect chemoreceptor superfamily. Gustatory receptor (GR) family. Gr22e subfamily. In terms of tissue distribution, expressed in neurons of the terminal external chemosensory organ of larvae.

It is found in the cell membrane. Its function is as follows. Probable gustatory receptor which mediates acceptance or avoidance behavior, depending on its substrates. The protein is Putative gustatory receptor 36b (Gr36b) of Drosophila melanogaster (Fruit fly).